A 111-amino-acid polypeptide reads, in one-letter code: Universal stress protein B (111 aa).

The helical transmembrane segment at Met1–Arg21 threads the bilayer. The Cytoplasmic segment spans residues Tyr22–Gln89. A helical membrane pass occupies residues Phe90–Trp110. A topological domain (periplasmic) is located at residue His111.

The protein belongs to the universal stress protein B family.

It localises to the cell inner membrane. The polypeptide is Universal stress protein B (uspB) (Salmonella choleraesuis (strain SC-B67)).